Reading from the N-terminus, the 296-residue chain is SHSP domain-containing protein CPUR_05420 (296 aa).

A disordered region spans residues 50-83 (AWQTCPQQRHPHQPDVSGPPGSGFGEQPSQDTPN). In terms of domain architecture, sHSP spans 169 to 296 (ETKKSFTPDI…GKGVKEITIV (128 aa)).

Belongs to the small heat shock protein (HSP20) family.

Monooxygenase; part of the ergochrome gene cluster responsible for the typical purple-black color of the ergot sclerotia. The ergochrome gene cluster produces several ergot pigments including the yellow ergochrome secalonic acid and its derivatives, as well as the red anthraquinones endocrocin and clavorubin. The pathway begins with the synthesis of atrochrysone thioester by the polyketide synthase (PKS) CPUR_05437. The atrochrysone carboxyl ACP thioesterase CPUR_05436 then breaks the thioester bond and releases the atrochrysone carboxylic acid from CPUR_05437. The atrochrysone carboxylic acid is then converted to atrochrysone which is further transformed into emodin anthrone. The next step is performed by the anthrone oxygenase CPUR_05434 that catalyzes the oxidation of emodinanthrone to emodin. Emodin is further modified to yield monodictyphenone via several steps involving CPUR_05427, CPUR_05428, CPUR_05429 and CPUR_05430. The short chain dehydrogenase/reductase CPUR_05418 then catalyzes the C-5 ketoreduction to give the xanthone skeleton of the monomeric units. Ergochromes formation requires further dimerization steps of different xanthone units, probably catalyzed by the cytochrome P450 monooxygenase CPUR_05419. CPUR_05425, CPUR_05426 and CPUR_05431 are unique to Claviceps, thus it is likely that they are involved in further modification of xanthone units or in their dimerization. The yellow ergochromes and the red anthraquinone pigments endocrocin and clavorubin are products from the same PKS derived precursors and the latter are likely shunt products in the pathway of xanthone biosynthesis. It is proposed that atrochrysone carboxylic acid released from the PKS CPUR_05437 can also be converted to endocrocin anthrone which is further oxidized into endocrocin by CPUR_05435. Endocrocin could be then modified to clavorubin, possibly by CPUR_05423 and CPUR_05431. Clavorubin is the principal anthraquinone metabolite produced by the cluster with a much higher yield compared to endocrocin. This Claviceps purpurea (strain 20.1) (Ergot fungus) protein is SHSP domain-containing protein CPUR_05420.